Here is a 399-residue protein sequence, read N- to C-terminus: Elongation factor Tu (399 aa).

The tr-type G domain maps to 10-204 (KPHVNIGTIG…AVDASIPEPE (195 aa)). The interval 19-26 (GHVDHGKT) is G1. 19 to 26 (GHVDHGKT) contacts GTP. Residue Thr-26 coordinates Mg(2+). The interval 60–64 (GITIN) is G2. Residues 81-84 (DCPG) are G3. Residues 81 to 85 (DCPGH) and 136 to 139 (NKCD) contribute to the GTP site. The interval 136 to 139 (NKCD) is G4. Residues 174–176 (SGL) are G5.

The protein belongs to the TRAFAC class translation factor GTPase superfamily. Classic translation factor GTPase family. EF-Tu/EF-1A subfamily. As to quaternary structure, monomer.

It is found in the cytoplasm. The catalysed reaction is GTP + H2O = GDP + phosphate + H(+). Its function is as follows. GTP hydrolase that promotes the GTP-dependent binding of aminoacyl-tRNA to the A-site of ribosomes during protein biosynthesis. This Prochlorococcus marinus (strain MIT 9312) protein is Elongation factor Tu.